Here is a 363-residue protein sequence, read N- to C-terminus: Phosphoserine aminotransferase (363 aa).

Arg-46 serves as a coordination point for L-glutamate. Pyridoxal 5'-phosphate-binding positions include 80–81, Trp-106, Thr-156, Asp-176, and Gln-199; that span reads AT. Lys-200 carries the N6-(pyridoxal phosphate)lysine modification. Residue 241 to 242 participates in pyridoxal 5'-phosphate binding; sequence NT.

It belongs to the class-V pyridoxal-phosphate-dependent aminotransferase family. SerC subfamily. Homodimer. Pyridoxal 5'-phosphate serves as cofactor.

Its subcellular location is the cytoplasm. The catalysed reaction is O-phospho-L-serine + 2-oxoglutarate = 3-phosphooxypyruvate + L-glutamate. It catalyses the reaction 4-(phosphooxy)-L-threonine + 2-oxoglutarate = (R)-3-hydroxy-2-oxo-4-phosphooxybutanoate + L-glutamate. It functions in the pathway amino-acid biosynthesis; L-serine biosynthesis; L-serine from 3-phospho-D-glycerate: step 2/3. It participates in cofactor biosynthesis; pyridoxine 5'-phosphate biosynthesis; pyridoxine 5'-phosphate from D-erythrose 4-phosphate: step 3/5. Catalyzes the reversible conversion of 3-phosphohydroxypyruvate to phosphoserine and of 3-hydroxy-2-oxo-4-phosphonooxybutanoate to phosphohydroxythreonine. The polypeptide is Phosphoserine aminotransferase (Leptospira interrogans serogroup Icterohaemorrhagiae serovar copenhageni (strain Fiocruz L1-130)).